Reading from the N-terminus, the 314-residue chain is Fumarylacetoacetate hydrolase domain-containing protein 2 (314 aa).

A divalent metal cation is bound by residues Glu-159, Glu-161, and Asp-190. The residue at position 203 (Lys-203) is an N6-acetyllysine; alternate. The residue at position 203 (Lys-203) is an N6-succinyllysine; alternate. Lys-234 bears the N6-acetyllysine mark.

Belongs to the FAH family. It depends on Ca(2+) as a cofactor. Mg(2+) is required as a cofactor.

In terms of biological role, may have hydrolase activity. The polypeptide is Fumarylacetoacetate hydrolase domain-containing protein 2 (FAHD2) (Pongo abelii (Sumatran orangutan)).